Consider the following 492-residue polypeptide: Probable cytosol aminopeptidase (492 aa).

Lys248 and Asp253 together coordinate Mn(2+). Lys260 is a catalytic residue. Asp271, Asp330, and Glu332 together coordinate Mn(2+). The active site involves Arg334.

The protein belongs to the peptidase M17 family. It depends on Mn(2+) as a cofactor.

The protein localises to the cytoplasm. It carries out the reaction Release of an N-terminal amino acid, Xaa-|-Yaa-, in which Xaa is preferably Leu, but may be other amino acids including Pro although not Arg or Lys, and Yaa may be Pro. Amino acid amides and methyl esters are also readily hydrolyzed, but rates on arylamides are exceedingly low.. The catalysed reaction is Release of an N-terminal amino acid, preferentially leucine, but not glutamic or aspartic acids.. Its function is as follows. Presumably involved in the processing and regular turnover of intracellular proteins. Catalyzes the removal of unsubstituted N-terminal amino acids from various peptides. The polypeptide is Probable cytosol aminopeptidase (pepA) (Aeropyrum pernix (strain ATCC 700893 / DSM 11879 / JCM 9820 / NBRC 100138 / K1)).